The sequence spans 421 residues: Na(+)/H(+) antiporter NhaA 1 (421 aa).

The next 11 membrane-spanning stretches (helical) occupy residues Ser48–Trp68, Leu93–Ile113, Ser129–Val149, Ala157–Leu177, Val187–Phe207, Leu215–Val235, Leu253–Gly273, Phe299–Leu319, Val326–Val346, Gly364–Phe384, and Ala392–Leu412.

The protein belongs to the NhaA Na(+)/H(+) (TC 2.A.33) antiporter family.

The protein localises to the cell membrane. It carries out the reaction Na(+)(in) + 2 H(+)(out) = Na(+)(out) + 2 H(+)(in). In terms of biological role, na(+)/H(+) antiporter that extrudes sodium in exchange for external protons. In Deinococcus geothermalis (strain DSM 11300 / CIP 105573 / AG-3a), this protein is Na(+)/H(+) antiporter NhaA 1.